Here is a 131-residue protein sequence, read N- to C-terminus: ER membrane protein complex subunit 5 (131 aa).

Over 1–3 the chain is Cytoplasmic; sequence MAP. A helical transmembrane segment spans residues 4–22; the sequence is SLWKGLVGIGLFALAHAAF. Over 23–43 the chain is Lumenal; sequence SAAQHRSYMRLTEKEDESLPI. Residues 44-63 traverse the membrane as a helical segment; that stretch reads DIVLQTLLAFAVTCYGIVHI. Residues 64–131 are Cytoplasmic-facing; that stretch reads AGEFKDMDAT…KLRKLESLRR (68 aa). S120 carries the post-translational modification Phosphoserine.

This sequence belongs to the membrane magnesium transporter (TC 1.A.67) family. As to quaternary structure, component of the ER membrane protein complex (EMC).

The protein resides in the endoplasmic reticulum membrane. Its subcellular location is the golgi apparatus membrane. The protein localises to the early endosome membrane. In terms of biological role, part of the endoplasmic reticulum membrane protein complex (EMC) that enables the energy-independent insertion into endoplasmic reticulum membranes of newly synthesized membrane proteins. Preferentially accommodates proteins with transmembrane domains that are weakly hydrophobic or contain destabilizing features such as charged and aromatic residues. Involved in the cotranslational insertion of multi-pass membrane proteins in which stop-transfer membrane-anchor sequences become ER membrane spanning helices. It is also required for the post-translational insertion of tail-anchored/TA proteins in endoplasmic reticulum membranes. By mediating the proper cotranslational insertion of N-terminal transmembrane domains in an N-exo topology, with translocated N-terminus in the lumen of the ER, controls the topology of multi-pass membrane proteins like the G protein-coupled receptors. By regulating the insertion of various proteins in membranes, it is indirectly involved in many cellular processes. May be involved in Mg(2+) transport. This is ER membrane protein complex subunit 5 from Homo sapiens (Human).